Here is an 85-residue protein sequence, read N- to C-terminus: COMM domain-containing protein 6 (85 aa).

Met1 carries the N-acetylmethionine modification. Positions 18–85 (QLIDFEWKLG…KEIAAIIETV (68 aa)) constitute a COMM domain.

Belongs to the COMM domain-containing protein 6 family. Component of the commander complex consisting of the CCC subcomplex and the retriever subcomplex. Component of the CCC (COMMD/CCDC22/CCDC93) subcomplex consisting of COMMD1, COMMD2, COMMD3, COMMD4, COMMD5, COMMD6, COMMD7, COMMD8, COMMD9, COMMD10, CCDC22 and CCDC93; within the complex forms a heterodimer with COMMD1. May form a homodimer with isoform 1. Interacts with RELA, RELB, NFKB1/p105. Does not interact with NFKBIB. Interacts with CCDC22, CCDC93, SCNN1B, CUL4A.

The protein resides in the nucleus. It localises to the cytoplasm. Scaffold protein in the commander complex that is essential for endosomal recycling of transmembrane cargos; the commander complex is composed of the CCC subcomplex and the retriever subcomplex. May modulate activity of cullin-RING E3 ubiquitin ligase (CRL) complexes. Down-regulates activation of NF-kappa-B. Inhibits TNF-induced NFKB1 activation. In Bos taurus (Bovine), this protein is COMM domain-containing protein 6 (COMMD6).